Here is a 211-residue protein sequence, read N- to C-terminus: Cyclin-dependent kinase inhibitor 3 (211 aa).

The interval 1–20 (MKPPISIQASEFDSSDEEPV) is disordered. An interaction with CDK2 region spans residues 1–34 (MKPPISIQASEFDSSDEEPVDEEQTPIQISWLPL). A Tyrosine-protein phosphatase domain is found at 32-200 (LPLSRVNCSQ…FRDKLAAYLS (169 aa)). Cysteine 140 serves as the catalytic Phosphocysteine intermediate.

The protein belongs to the protein-tyrosine phosphatase family. In terms of assembly, interacts with cyclin-dependent kinases such as CDK1, CDK2 and CDK3. Does not interact with CDK4. Interacts (via C-terminus) with phosphorylated CDK2 (via C-terminal helix). Interacts with MS4A3 (via C-terminus); the interaction enhances CDKN3 enzymatic activity.

It localises to the cytoplasm. The protein localises to the perinuclear region. It carries out the reaction O-phospho-L-tyrosyl-[protein] + H2O = L-tyrosyl-[protein] + phosphate. The catalysed reaction is O-phospho-L-seryl-[protein] + H2O = L-seryl-[protein] + phosphate. It catalyses the reaction O-phospho-L-threonyl-[protein] + H2O = L-threonyl-[protein] + phosphate. Its function is as follows. May play a role in cell cycle regulation. Dual specificity phosphatase active toward substrates containing either phosphotyrosine or phosphoserine residues. Dephosphorylates CDK2 at 'Thr-160' in a cyclin-dependent manner. This is Cyclin-dependent kinase inhibitor 3 from Mus musculus (Mouse).